A 165-amino-acid polypeptide reads, in one-letter code: Ribosome maturation factor RimM (165 aa).

In terms of domain architecture, PRC barrel spans 94 to 165 (EDEFYIADLT…YVILNYQREA (72 aa)).

Belongs to the RimM family. As to quaternary structure, binds ribosomal protein uS19.

The protein localises to the cytoplasm. Its function is as follows. An accessory protein needed during the final step in the assembly of 30S ribosomal subunit, possibly for assembly of the head region. Essential for efficient processing of 16S rRNA. May be needed both before and after RbfA during the maturation of 16S rRNA. It has affinity for free ribosomal 30S subunits but not for 70S ribosomes. The protein is Ribosome maturation factor RimM of Rickettsia conorii (strain ATCC VR-613 / Malish 7).